The chain runs to 238 residues: Pyridoxine 5'-phosphate synthase (238 aa).

Residue N7 participates in 3-amino-2-oxopropyl phosphate binding. D9–H10 contributes to the 1-deoxy-D-xylulose 5-phosphate binding site. R18 is a binding site for 3-amino-2-oxopropyl phosphate. The active-site Proton acceptor is H43. Residues R45 and H50 each coordinate 1-deoxy-D-xylulose 5-phosphate. Residue E70 is the Proton acceptor of the active site. T100 is a 1-deoxy-D-xylulose 5-phosphate binding site. H190 acts as the Proton donor in catalysis. 3-amino-2-oxopropyl phosphate contacts are provided by residues G191 and G212–H213.

The protein belongs to the PNP synthase family. As to quaternary structure, homooctamer; tetramer of dimers.

The protein localises to the cytoplasm. It catalyses the reaction 3-amino-2-oxopropyl phosphate + 1-deoxy-D-xylulose 5-phosphate = pyridoxine 5'-phosphate + phosphate + 2 H2O + H(+). The protein operates within cofactor biosynthesis; pyridoxine 5'-phosphate biosynthesis; pyridoxine 5'-phosphate from D-erythrose 4-phosphate: step 5/5. Its function is as follows. Catalyzes the complicated ring closure reaction between the two acyclic compounds 1-deoxy-D-xylulose-5-phosphate (DXP) and 3-amino-2-oxopropyl phosphate (1-amino-acetone-3-phosphate or AAP) to form pyridoxine 5'-phosphate (PNP) and inorganic phosphate. This Prochlorococcus marinus (strain MIT 9312) protein is Pyridoxine 5'-phosphate synthase.